The chain runs to 214 residues: Ribosomal RNA small subunit methyltransferase G (214 aa).

S-adenosyl-L-methionine is bound by residues G81, M86, 132–133 (VE), and R147.

Belongs to the methyltransferase superfamily. RNA methyltransferase RsmG family.

Its subcellular location is the cytoplasm. The enzyme catalyses guanosine(527) in 16S rRNA + S-adenosyl-L-methionine = N(7)-methylguanosine(527) in 16S rRNA + S-adenosyl-L-homocysteine. Its function is as follows. Specifically methylates the N7 position of guanine in position 527 of 16S rRNA. In Pseudomonas fluorescens (strain Pf0-1), this protein is Ribosomal RNA small subunit methyltransferase G.